Here is a 40-residue protein sequence, read N- to C-terminus: Mastoparan-like peptide 12c (40 aa).

The first 7 residues, 1–7, serve as a signal peptide directing secretion; sequence MSAEALA. The segment at 1 to 22 is disordered; sequence MSAEALADPKADPLAGPNPDAD. 4 AXPX repeats span residues 7–10, 11–14, 15–18, and 19–22; these read ADPK, ADPL, AGPN, and PDAD. Positions 8-25 are excised as a propeptide; that stretch reads DPKADPLAGPNPDADPEA. At Leu-39 the chain carries Leucine amide.

The protein belongs to the MCD family. Mastoparan subfamily. In terms of tissue distribution, expressed by the venom gland.

The protein resides in the secreted. Shows mast cell degranulation and antimicrobial activities against the Gram-negative bacteria E.coli ATCC 25922 (MIC=6.0 ug/ml), the Gram-positive bacteria S.aureus ATCC 2592 (MIC=3.0 ug/ml) and the fungus C.albicans ATCC 2002 (MIC=12 ug/ml). Exhibits little hemolytic activity against washed human erythrocytes. Its mast cell degranulation activity may be related to the activation of G-protein coupled receptors in mast cells as well as interaction with other proteins located in cell endosomal membranes in the mast cells. This Vespa magnifica (Hornet) protein is Mastoparan-like peptide 12c.